A 93-amino-acid polypeptide reads, in one-letter code: UPF0457 protein GTNG_2792 (93 aa).

The protein belongs to the UPF0457 family.

The chain is UPF0457 protein GTNG_2792 from Geobacillus thermodenitrificans (strain NG80-2).